Reading from the N-terminus, the 294-residue chain is ATP synthase gamma chain (294 aa).

It belongs to the ATPase gamma chain family. In terms of assembly, F-type ATPases have 2 components, CF(1) - the catalytic core - and CF(0) - the membrane proton channel. CF(1) has five subunits: alpha(3), beta(3), gamma(1), delta(1), epsilon(1). CF(0) has three main subunits: a, b and c.

The protein resides in the cell inner membrane. Its function is as follows. Produces ATP from ADP in the presence of a proton gradient across the membrane. The gamma chain is believed to be important in regulating ATPase activity and the flow of protons through the CF(0) complex. The protein is ATP synthase gamma chain of Campylobacter jejuni (strain RM1221).